The sequence spans 445 residues: Phosphoglucosamine mutase (445 aa).

Catalysis depends on Ser-101, which acts as the Phosphoserine intermediate. Mg(2+) contacts are provided by Ser-101, Asp-240, Asp-242, and Asp-244. Ser-101 is subject to Phosphoserine.

Belongs to the phosphohexose mutase family. Requires Mg(2+) as cofactor. Post-translationally, activated by phosphorylation.

It catalyses the reaction alpha-D-glucosamine 1-phosphate = D-glucosamine 6-phosphate. Its function is as follows. Catalyzes the conversion of glucosamine-6-phosphate to glucosamine-1-phosphate. The chain is Phosphoglucosamine mutase from Pseudomonas fluorescens (strain SBW25).